Here is a 101-residue protein sequence, read N- to C-terminus: A-type ATP synthase subunit K (101 aa).

Transmembrane regions (helical) follow at residues 4-24 (ALLI…AAQA), 32-52 (FMGI…GAGV), and 75-95 (VLIF…FAVL).

Belongs to the V-ATPase proteolipid subunit family. Has multiple subunits with at least A(3), B(3), C, D, E, F, H, I and proteolipid K(x).

It localises to the cell membrane. In terms of biological role, component of the A-type ATP synthase that produces ATP from ADP in the presence of a proton gradient across the membrane. This is A-type ATP synthase subunit K from Sulfolobus acidocaldarius (strain ATCC 33909 / DSM 639 / JCM 8929 / NBRC 15157 / NCIMB 11770).